Consider the following 422-residue polypeptide: Glycine amidinotransferase, mitochondrial (422 aa).

Residues 1–37 constitute a mitochondrion transit peptide; that stretch reads MLRVRCLRGGSRGAEAAHFIGSRLGRAFTGWVQRSLQ. Catalysis depends on residues Asp-253 and His-302. The active-site Amidino-cysteine intermediate is the Cys-406. Thr-416 is subject to Phosphothreonine.

It belongs to the amidinotransferase family. As to quaternary structure, homodimer.

It is found in the mitochondrion inner membrane. It catalyses the reaction L-arginine + glycine = guanidinoacetate + L-ornithine. It participates in amine and polyamine biosynthesis; creatine biosynthesis; creatine from L-arginine and glycine: step 1/2. In terms of biological role, catalyzes the biosynthesis of guanidinoacetate, the immediate precursor of creatine. Creatine plays a vital role in energy metabolism in muscle tissues. May play a role in embryonic and central nervous system development. This is Glycine amidinotransferase, mitochondrial from Gallus gallus (Chicken).